The sequence spans 295 residues: Light-independent protochlorophyllide reductase iron-sulfur ATP-binding protein (295 aa).

Residues 39-44 (GIGKST) and K68 contribute to the ATP site. S43 contacts Mg(2+). [4Fe-4S] cluster-binding residues include C124 and C158. Residue 209–210 (NR) participates in ATP binding.

The protein belongs to the NifH/BchL/ChlL family. Homodimer. Protochlorophyllide reductase is composed of three subunits; ChlL, ChlN and ChlB. The cofactor is [4Fe-4S] cluster.

The catalysed reaction is chlorophyllide a + oxidized 2[4Fe-4S]-[ferredoxin] + 2 ADP + 2 phosphate = protochlorophyllide a + reduced 2[4Fe-4S]-[ferredoxin] + 2 ATP + 2 H2O. It participates in porphyrin-containing compound metabolism; chlorophyll biosynthesis (light-independent). Functionally, component of the dark-operative protochlorophyllide reductase (DPOR) that uses Mg-ATP and reduced ferredoxin to reduce ring D of protochlorophyllide (Pchlide) to form chlorophyllide a (Chlide). This reaction is light-independent. The L component serves as a unique electron donor to the NB-component of the complex, and binds Mg-ATP. This chain is Light-independent protochlorophyllide reductase iron-sulfur ATP-binding protein, found in Prochlorococcus marinus (strain AS9601).